A 788-amino-acid polypeptide reads, in one-letter code: Structure-specific endonuclease subunit SLX4 (788 aa).

Disordered regions lie at residues L59–R86, K562–S584, and D599–P622. Positions K562–R573 are enriched in basic and acidic residues. Residues D612–P622 show a composition bias toward polar residues.

The protein belongs to the SLX4 family. As to quaternary structure, forms a heterodimer with SLX1. Post-translationally, phosphorylated in response to DNA damage.

The protein resides in the nucleus. Regulatory subunit of the SLX1-SLX4 structure-specific endonuclease that resolves DNA secondary structures generated during DNA repair and recombination. Has endonuclease activity towards branched DNA substrates, introducing single-strand cuts in duplex DNA close to junctions with ss-DNA. This chain is Structure-specific endonuclease subunit SLX4, found in Debaryomyces hansenii (strain ATCC 36239 / CBS 767 / BCRC 21394 / JCM 1990 / NBRC 0083 / IGC 2968) (Yeast).